We begin with the raw amino-acid sequence, 161 residues long: Nucleotide-binding protein Bphyt_3208 (161 aa).

It belongs to the YajQ family.

Its function is as follows. Nucleotide-binding protein. This is Nucleotide-binding protein Bphyt_3208 from Paraburkholderia phytofirmans (strain DSM 17436 / LMG 22146 / PsJN) (Burkholderia phytofirmans).